The primary structure comprises 715 residues: Forkhead box protein P2 (715 aa).

Residues Met-1–Asp-28 show a composition bias toward polar residues. Disordered stretches follow at residues Met-1–Thr-46 and Asp-281–Ser-339. Positions Thr-292–Ser-305 are enriched in low complexity. Residues Ala-326–Gly-337 are compositionally biased toward basic and acidic residues. The segment at Gly-346–His-371 adopts a C2H2-type zinc-finger fold. The tract at residues Val-388–Leu-409 is leucine-zipper. The tract at residues Pro-422 to Val-426 is CTBP1-binding. Residues Thr-438–Gln-459 show a composition bias toward low complexity. Residues Thr-438–Thr-465 are disordered. The segment at residues Arg-504 to Leu-594 is a DNA-binding region (fork-head). Disordered stretches follow at residues Leu-649–Ile-668 and Val-678–Glu-715. Over residues Leu-699–Glu-715 the composition is skewed to acidic residues.

Forms homodimers and heterodimers with FOXP1 and FOXP4. Dimerization is required for DNA-binding. Interacts with CTBP1. Interacts with FOXP1. Isoform 1 and isoform 3 interact with TBR1. Interacts with ZMYM2. In terms of tissue distribution, isoform 1 and isoform 6 are expressed in adult and fetal brain, caudate nucleus and lung.

It localises to the nucleus. In terms of biological role, transcriptional repressor that may play a role in the specification and differentiation of lung epithelium. May also play a role in developing neural, gastrointestinal and cardiovascular tissues. Can act with CTBP1 to synergistically repress transcription but CTPBP1 is not essential. Plays a role in synapse formation by regulating SRPX2 levels. Involved in neural mechanisms mediating the development of speech and language. The protein is Forkhead box protein P2 (FOXP2) of Homo sapiens (Human).